We begin with the raw amino-acid sequence, 165 residues long: Large ribosomal subunit protein uL10 (165 aa).

It belongs to the universal ribosomal protein uL10 family. As to quaternary structure, part of the ribosomal stalk of the 50S ribosomal subunit. The N-terminus interacts with L11 and the large rRNA to form the base of the stalk. The C-terminus forms an elongated spine to which L12 dimers bind in a sequential fashion forming a multimeric L10(L12)X complex.

Functionally, forms part of the ribosomal stalk, playing a central role in the interaction of the ribosome with GTP-bound translation factors. The sequence is that of Large ribosomal subunit protein uL10 from Shewanella pealeana (strain ATCC 700345 / ANG-SQ1).